A 184-amino-acid polypeptide reads, in one-letter code: MVLPLMICYRPIGIIHSPFKEPKDVPIQASAAKDIEGTVEVFPEFSEGLKDIEEFSHIILIYHFHRAKFKGLLVEPYMHEEKHGVFATRAPARPNPIGISVVRLVERKGNILRIRDVDILDGTPLLDIKPYVPEFDVRENVRIGWLEKNVHKLEKARDDGRFFSLNFNYIFPASLLEAPERAKL.

The TsaA-like domain occupies 9 to 140 (YRPIGIIHSP…YVPEFDVREN (132 aa)). Residues 26-28 (PIQ), 65-66 (HR), arginine 89, and 120-123 (LDGT) contribute to the S-adenosyl-L-methionine site.

This sequence belongs to the tRNA methyltransferase O family.

In Pyrococcus abyssi (strain GE5 / Orsay), this protein is Probable S-adenosyl-L-methionine-binding protein PYRAB06630.